The following is a 168-amino-acid chain: G/U mismatch-specific DNA glycosylase (168 aa).

It belongs to the uracil-DNA glycosylase (UDG) superfamily. TDG/mug family. As to quaternary structure, binds DNA as a monomer.

It localises to the cytoplasm. The enzyme catalyses Specifically hydrolyzes mismatched double-stranded DNA and polynucleotides, releasing free uracil.. Excises ethenocytosine and uracil, which can arise by alkylation or deamination of cytosine, respectively, from the corresponding mispairs with guanine in ds-DNA. It is capable of hydrolyzing the carbon-nitrogen bond between the sugar-phosphate backbone of the DNA and the mispaired base. The complementary strand guanine functions in substrate recognition. Required for DNA damage lesion repair in stationary-phase cells. This chain is G/U mismatch-specific DNA glycosylase, found in Salmonella paratyphi B (strain ATCC BAA-1250 / SPB7).